The following is an 804-amino-acid chain: Endoplasmin (804 aa).

The N-terminal stretch at 1-21 is a signal peptide; the sequence is MRALWVLGLCCVLLTFGSVRA. The SRT pseudosubstrate motif motif lies at 42 to 44; sequence SRT. Asparagine 62 carries an N-linked (GlcNAc...) asparagine glycan. Serine 64 is modified (phosphoserine). Asparagine 107 is a glycosylation site (N-linked (GlcNAc...) asparagine). Positions 107, 149, and 162 each coordinate ATP. Position 168 is an N6-(2-hydroxyisobutyryl)lysine (lysine 168). Phosphoserine is present on serine 172. Phenylalanine 199 provides a ligand contact to ATP. Asparagine 217 is a glycosylation site (N-linked (GlcNAc...) asparagine). The segment at 288–323 is disordered; sequence TVEEPMEEEEAAKEEKEESDDEAAVEEEEEEKKPKT. A compositionally biased stretch (acidic residues) spans 289–317; the sequence is VEEPMEEEEAAKEEKEESDDEAAVEEEEE. 2 positions are modified to phosphoserine: serine 306 and serine 403. Lysine 404 carries the N6-succinyllysine modification. N-linked (GlcNAc...) asparagine glycosylation occurs at asparagine 445. Position 447 is a phosphoserine (serine 447). Lysine 479 bears the N6-acetyllysine mark. 2 N-linked (GlcNAc...) asparagine glycosylation sites follow: asparagine 481 and asparagine 502. Position 633 is an N6-succinyllysine (lysine 633). Positions 750-804 are disordered; sequence DPDAKVEDEPEEEPEETTEDTTEDTEQDEDEEMDVGTDEEEQETAKESTAEKDEL. A compositionally biased stretch (acidic residues) spans 757 to 791; the sequence is DEPEEEPEETTEDTTEDTEQDEDEEMDVGTDEEEQ. Position 786 is a phosphothreonine (threonine 786). Residues 792 to 804 show a composition bias toward basic and acidic residues; the sequence is ETAKESTAEKDEL. The short motif at 801 to 804 is the Prevents secretion from ER element; sequence KDEL.

Belongs to the heat shock protein 90 family. As to quaternary structure, homodimer; disulfide-linked. Component of an EIF2 complex at least composed of CELF1/CUGBP1, CALR, CALR3, EIF2S1, EIF2S2, HSP90B1 and HSPA5. Part of a large chaperone multiprotein complex comprising DNAJB11, HSP90B1, HSPA5, HYOU, PDIA2, PDIA4, PDIA6, PPIB, SDF2L1, UGGT1 and very small amounts of ERP29, but not, or at very low levels, CALR nor CANX. Interacts with AIMP1; regulates its retention in the endoplasmic reticulum. Hyperglycosylated form interacts with OS9; promoting its degradation by the endoplasmic reticulum associated degradation (ERAD). Interacts with CNPY3. This interaction is disrupted in the presence of ATP. Interacts with TLR4 and TLR9, but not with TLR3. Interacts with MZB1 in a calcium-dependent manner. Interacts with METTL23. Interacts with IL1B; the interaction facilitates cargo translocation into the ERGIC. Interacts with EIF2AK3. In terms of processing, phosphorylated by CK2. Post-translationally, N-glycosylated cotranslationally at Asn-217 by STT3A-containing OST-A complex: this glycosylation is constitutive. In response to various stress, 5 additional facultative sites (Asn-62, Asn-107, Asn-445, Asn-481 and Asn-502) can be glycosylated post-translationally by STT3B-containing OST-B complex, leading to a hyperglycosylated form that is degraded by the ER-associated degradation (ERAD) pathway. In normal conditions, the OST-A complex together with CCDC134 prevent glycosylation at facultative sites during protein folding, thereby preventing hyperglycosylation. Mechanistically, nascent HSP90B1 is tethered during translation to a specialized CCDC134-containing translocon that forms a microenvironment for its folding, in which STT3A associates with the SRT pseudosubstrate motif, and prevents access to facultative glycosylation sites until folding is completed, rendering its facultative sites inaccessible to the OST-B complex.

Its subcellular location is the endoplasmic reticulum lumen. It localises to the sarcoplasmic reticulum lumen. The protein localises to the melanosome. It catalyses the reaction ATP + H2O = ADP + phosphate + H(+). Functionally, ATP-dependent chaperone involved in the processing of proteins in the endoplasmic reticulum, regulating their transport. Together with MESD, acts as a modulator of the Wnt pathway by promoting the folding of LRP6, a coreceptor of the canonical Wnt pathway. When associated with CNPY3, required for proper folding of Toll-like receptors. Promotes folding and trafficking of TLR4 to the cell surface. May participate in the unfolding of cytosolic leaderless cargos (lacking the secretion signal sequence) such as the interleukin 1/IL-1 to facilitate their translocation into the ERGIC (endoplasmic reticulum-Golgi intermediate compartment) and secretion; the translocation process is mediated by the cargo receptor TMED10. The chain is Endoplasmin (HSP90B1) from Macaca fascicularis (Crab-eating macaque).